The chain runs to 934 residues: Isoleucine--tRNA ligase (934 aa).

Residues proline 58 to histidine 68 carry the 'HIGH' region motif. Glutamate 559 lines the L-isoleucyl-5'-AMP pocket. The 'KMSKS' region signature appears at lysine 600–serine 604. Lysine 603 lines the ATP pocket. Zn(2+)-binding residues include cysteine 897, cysteine 900, cysteine 917, and cysteine 920.

The protein belongs to the class-I aminoacyl-tRNA synthetase family. IleS type 1 subfamily. As to quaternary structure, monomer. Requires Zn(2+) as cofactor.

The protein localises to the cytoplasm. The catalysed reaction is tRNA(Ile) + L-isoleucine + ATP = L-isoleucyl-tRNA(Ile) + AMP + diphosphate. Catalyzes the attachment of isoleucine to tRNA(Ile). As IleRS can inadvertently accommodate and process structurally similar amino acids such as valine, to avoid such errors it has two additional distinct tRNA(Ile)-dependent editing activities. One activity is designated as 'pretransfer' editing and involves the hydrolysis of activated Val-AMP. The other activity is designated 'posttransfer' editing and involves deacylation of mischarged Val-tRNA(Ile). This Teredinibacter turnerae (strain ATCC 39867 / T7901) protein is Isoleucine--tRNA ligase.